A 1066-amino-acid chain; its full sequence is Probable sucrose-phosphate synthase 4 (1066 aa).

Disordered stretches follow at residues 132 to 166 (YAAA…GRMP) and 688 to 714 (PRHP…SLRD). Residues 143 to 162 (EGEKGENINESSSTHDESTR) are compositionally biased toward basic and acidic residues.

It belongs to the glycosyltransferase 1 family. As to quaternary structure, homodimer or homotetramer. Expressed in germinating seeds.

It catalyses the reaction beta-D-fructose 6-phosphate + UDP-alpha-D-glucose = sucrose 6(F)-phosphate + UDP + H(+). It participates in glycan biosynthesis; sucrose biosynthesis; sucrose from D-fructose 6-phosphate and UDP-alpha-D-glucose: step 1/2. With respect to regulation, activity is regulated by phosphorylation and moderated by concentration of metabolites and light. Functionally, plays a role in photosynthetic sucrose synthesis by catalyzing the rate-limiting step of sucrose biosynthesis from UDP-glucose and fructose- 6-phosphate. Involved in the regulation of carbon partitioning in the leaves of plants. May regulate the synthesis of sucrose and therefore play a major role as a limiting factor in the export of photoassimilates out of the leaf. Plays a role for sucrose availability that is essential for plant growth and fiber elongation. This Oryza sativa subsp. japonica (Rice) protein is Probable sucrose-phosphate synthase 4 (SPS4).